The sequence spans 284 residues: ATP phosphoribosyltransferase (284 aa).

The protein belongs to the ATP phosphoribosyltransferase family. Long subfamily. Requires Mg(2+) as cofactor.

The protein localises to the cytoplasm. The enzyme catalyses 1-(5-phospho-beta-D-ribosyl)-ATP + diphosphate = 5-phospho-alpha-D-ribose 1-diphosphate + ATP. Its pathway is amino-acid biosynthesis; L-histidine biosynthesis; L-histidine from 5-phospho-alpha-D-ribose 1-diphosphate: step 1/9. With respect to regulation, feedback inhibited by histidine. Its function is as follows. Catalyzes the condensation of ATP and 5-phosphoribose 1-diphosphate to form N'-(5'-phosphoribosyl)-ATP (PR-ATP). Has a crucial role in the pathway because the rate of histidine biosynthesis seems to be controlled primarily by regulation of HisG enzymatic activity. The polypeptide is ATP phosphoribosyltransferase (Methanococcoides burtonii (strain DSM 6242 / NBRC 107633 / OCM 468 / ACE-M)).